A 214-amino-acid chain; its full sequence is Cytochrome c biogenesis ATP-binding export protein CcmA (214 aa).

The ABC transporter domain maps to leucine 8–valine 212. Residue glycine 40–threonine 47 participates in ATP binding.

Belongs to the ABC transporter superfamily. CcmA exporter (TC 3.A.1.107) family. In terms of assembly, the complex is composed of two ATP-binding proteins (CcmA) and two transmembrane proteins (CcmB).

Its subcellular location is the cell inner membrane. It catalyses the reaction heme b(in) + ATP + H2O = heme b(out) + ADP + phosphate + H(+). Functionally, part of the ABC transporter complex CcmAB involved in the biogenesis of c-type cytochromes; once thought to export heme, this seems not to be the case, but its exact role is uncertain. Responsible for energy coupling to the transport system. The polypeptide is Cytochrome c biogenesis ATP-binding export protein CcmA (Aromatoleum aromaticum (strain DSM 19018 / LMG 30748 / EbN1) (Azoarcus sp. (strain EbN1))).